The following is a 1230-amino-acid chain: Cullin-associated NEDD8-dissociated protein 1 (1230 aa).

A2 carries the post-translational modification N-acetylalanine. HEAT repeat units follow at residues 2 to 39, 44 to 81, 83 to 119, 131 to 165, 171 to 208, 210 to 247, 248 to 282, 289 to 366, 370 to 407, 424 to 467, 471 to 510, and 515 to 552; these read ASASYHISNLLEKMTSSGKDFRFMATNDLMTELQKDSI, DSERKVVKMILKLQEDKNGEVQNLAVKCLGPLVSKVKE, QVETIVDTLCTNMLSDKEQLRDISSIGLKTVIGELPP, CKKITGRLTSAIAKQEDVSVQLEALDIMADMLSRQ, NFHPSILTCLLPQLTSPRLAVRKRTIIALGHLVMSCGN, VFVGLIEHLLSELSKNDSMSTTRTYIQCIAAISRQAGH, RIGEYLEKIIPLVVKFCNVDDDELREYCIQAFESF, EVYP…TRHE, EFYKTVSPALISRFKEREENVKADVFHAYLSLLKQTRP, PLTM…VLPG, QHIPVLVPGIIFSLNDESSSSNLKIDALSCLYVILCNHSP, and PHVQALVPPVVACVGDPFYKITSEALLVTQQLVKVIRP. K55 bears the N6-acetyllysine mark. Residues 315 to 343 are disordered; the sequence is DEDEDENAMDADGGDDDDQGSDDEYSDDG. S335 is subject to Phosphoserine. A Phosphoserine modification is found at S558. HEAT repeat units lie at residues 563 to 602, 606 to 643, 646 to 683, 688 to 725, 729 to 768, 770 to 808, 809 to 845, 852 to 889, 890 to 927, 928 to 960, 961 to 998, 1002 to 1039, 1043 to 1097, 1099 to 1133, and 1140 to 1189; these read PYIKDVFTCTIKRLKAADIDQDVKERAISCMGQIICNLGD, SDLPNTLQIFLERLKNEITRLTTVKALTLIAGSPLKID, PVLGEGVPILASFLRKNQRALKLGTLSALDILIKNYSD, AMIDAVLDELPPLISESDMHVSQMAISFLTTLAKVYPS, KISGSILNELIGLVRSPLLQGGALSAMLDFFQALVVTGTN, LGYMDLLRMLTGPVYSQSTALTHKQSYYSIAKCVAALTR, ACPKEGPAVVGQFIQDVKNSRSTDSIRLLALLSLGEV, SGQLELKSVILEAFSSPSEEVKSAASYALGSISVGNLP, EYLPFVLQEITSQPKRQYLLLHSLKEIISSASVVGLKP, YVENIWALLLKHCECAEEGTRNVVAECLGKLTL, IDPETLLPRLKGYLISGSSYARSSVVTAVKFTISDHPQ, PLLKNCIGDFLKTLEDPDLNVRRVALVTFNSAAHNKPS, DLLD…DSCL, RLDIFEFLNHVEDGLKDHYDIKMLTFLMLVRLSTL, and QRLD…IPEA. N6-acetyllysine is present on K971.

This sequence belongs to the CAND family. Interacts with TBP. Part of a complex that contains CUL1 and RBX1. Interacts with unneddylated cullins: interacts with CUL1, CUL2, CUL3, CUL4A, CUL4B and CUL5. Does not bind neddylated CUL1. Interaction with cullins is abolished in presence of COMMD1, which antagonizes with CAND1 for interacting with cullins. Interacts with ERCC6. Interacts with DCUN1D1, DCUN1D2, DCUN1D3, DCUN1D4 and DCUN1D5; these interactions are bridged by cullins and strongly inhibits the neddylation of cullins.

It is found in the cytoplasm. Its subcellular location is the nucleus. Functionally, key assembly factor of SCF (SKP1-CUL1-F-box protein) E3 ubiquitin ligase complexes that promotes the exchange of the substrate-recognition F-box subunit in SCF complexes, thereby playing a key role in the cellular repertoire of SCF complexes. Acts as a F-box protein exchange factor. The exchange activity of CAND1 is coupled with cycles of neddylation conjugation: in the deneddylated state, cullin-binding CAND1 binds CUL1-RBX1, increasing dissociation of the SCF complex and promoting exchange of the F-box protein. Probably plays a similar role in other cullin-RING E3 ubiquitin ligase complexes. The chain is Cullin-associated NEDD8-dissociated protein 1 (CAND1) from Pongo abelii (Sumatran orangutan).